The primary structure comprises 78 residues: Acyl carrier protein (78 aa).

One can recognise a Carrier domain in the interval 1–76 (MSVAEKVKEI…DAISFIEKKK (76 aa)). Serine 36 carries the O-(pantetheine 4'-phosphoryl)serine modification.

Belongs to the acyl carrier protein (ACP) family. Post-translationally, 4'-phosphopantetheine is transferred from CoA to a specific serine of apo-ACP by AcpS. This modification is essential for activity because fatty acids are bound in thioester linkage to the sulfhydryl of the prosthetic group.

The protein localises to the cytoplasm. It functions in the pathway lipid metabolism; fatty acid biosynthesis. Carrier of the growing fatty acid chain in fatty acid biosynthesis. The sequence is that of Acyl carrier protein from Solidesulfovibrio magneticus (strain ATCC 700980 / DSM 13731 / RS-1) (Desulfovibrio magneticus).